Here is a 336-residue protein sequence, read N- to C-terminus: Deoxyhypusine hydroxylase (336 aa).

HEAT-like PBS-type repeat units follow at residues 68–94 and 101–127; these read LKHELAYCLGQTRNTDALPFLLDVVQD and CRHEAAEALGALGYESSLEVLKALRDN. Positions 70, 71, 103, and 104 each coordinate Fe cation. The interval 158–179 is disordered; it reads LKPSDFTSIDPAPPMPLTAKEP. 2 HEAT-like PBS-type repeats span residues 235 to 261 and 268 to 295; these read FRHEIAFVFGQLCHPASVPSLTETLSD and VRHEAAEALGSLGDVEGVEDTLKKFLND. Fe cation contacts are provided by H237, E238, H270, and E271.

It belongs to the deoxyhypusine hydroxylase family. The cofactor is Fe(2+).

The protein resides in the cytoplasm. The protein localises to the nucleus. The enzyme catalyses [eIF5A protein]-deoxyhypusine + AH2 + O2 = [eIF5A protein]-hypusine + A + H2O. It functions in the pathway protein modification; eIF5A hypusination. In terms of biological role, catalyzes the hydroxylation of the N(6)-(4-aminobutyl)-L-lysine intermediate to form hypusine, an essential post-translational modification only found in mature eIF-5A factor. The chain is Deoxyhypusine hydroxylase (lia1) from Emericella nidulans (strain FGSC A4 / ATCC 38163 / CBS 112.46 / NRRL 194 / M139) (Aspergillus nidulans).